The chain runs to 98 residues: NADH-ubiquinone oxidoreductase chain 4L (98 aa).

Transmembrane regions (helical) follow at residues 1 to 21, 29 to 49, and 61 to 81; these read MSLT…GLLM, SLLC…VTIL, and IILL…LVMV.

Belongs to the complex I subunit 4L family. In terms of assembly, core subunit of respiratory chain NADH dehydrogenase (Complex I) which is composed of 45 different subunits.

The protein resides in the mitochondrion inner membrane. The enzyme catalyses a ubiquinone + NADH + 5 H(+)(in) = a ubiquinol + NAD(+) + 4 H(+)(out). Functionally, core subunit of the mitochondrial membrane respiratory chain NADH dehydrogenase (Complex I) which catalyzes electron transfer from NADH through the respiratory chain, using ubiquinone as an electron acceptor. Part of the enzyme membrane arm which is embedded in the lipid bilayer and involved in proton translocation. The protein is NADH-ubiquinone oxidoreductase chain 4L (MT-ND4L) of Sturnira lilium (Lesser yellow-shouldered bat).